Consider the following 483-residue polypeptide: MAPPTRIGLAGLAVMGQNLALNIAEKGFPISVYNRTTSKVDETVERAKQEGNLPLYGFHDPESFVNSIQKPRVIIMLVKAGAPVDATIKTLSAYLEKGDCIIDGGNEWYENTERREKAMEEKGLLYLGMGVSGGEEGARNGPSMMPGGSFDAYKNIEDILTKVAAQVDSGPCVTYIGKGGSGNFVKMIHNGIEYGDMQLIAEAYDVLKSVGKLSNEELKEVFAEWNRGELLSFLIEITADIFGIKDDKGEGYLVDKVLDKTGMKGTGKWTVQQAAELSVAAPTIASSLDSRFLSGLKDERVEAAKVFKAGGVEDTLSDQVVDKKKLIDDVRQALYAAKICSYAQGMNLIRAKSVEKEWDLKLGELARIWKGGCIIRAMFLDRIKKAYDRNPNLSNLLIDPEFSKEMIERQSAWRRVVCLAIGAGISTPGMSSSLAYFDSYRRERLPANLVQAQRDYFGAHTYERIDIPGAFHTEWFKLAKSKI.

NADP(+)-binding positions include 11-16 (GLAVMG), 34-36 (NRT), 78-80 (VKA), and Asn106. Residues Asn106 and 132–134 (SGG) each bind substrate. Lys186 acts as the Proton acceptor in catalysis. Substrate is bound at residue 189–190 (HN). The active-site Proton donor is the Glu193. Residues Tyr194, Lys264, Arg291, Arg454, and His460 each coordinate substrate.

The protein belongs to the 6-phosphogluconate dehydrogenase family. In terms of assembly, homodimer.

It localises to the cytoplasm. It catalyses the reaction 6-phospho-D-gluconate + NADP(+) = D-ribulose 5-phosphate + CO2 + NADPH. It functions in the pathway carbohydrate degradation; pentose phosphate pathway; D-ribulose 5-phosphate from D-glucose 6-phosphate (oxidative stage): step 3/3. Its function is as follows. Catalyzes the oxidative decarboxylation of 6-phosphogluconate to ribulose 5-phosphate and CO(2), with concomitant reduction of NADP to NADPH. The protein is 6-phosphogluconate dehydrogenase, decarboxylating 1 (pgdC) of Spinacia oleracea (Spinach).